The sequence spans 149 residues: Calmodulin (149 aa).

A2 carries the post-translational modification N-acetylalanine. EF-hand domains lie at 8–43 (EQIA…LGQN), 44–79 (PTEA…KMKD), 81–116 (DTEE…LGEK), and 117–149 (LTDE…MMAK). Ca(2+) contacts are provided by D21, D23, D25, T27, E32, D57, D59, N61, T63, E68, D94, D96, N98, and E105. An N6,N6,N6-trimethyllysine modification is found at K116. Residues D130, D132, D134, Q136, and E141 each coordinate Ca(2+).

This sequence belongs to the calmodulin family.

Calmodulin mediates the control of a large number of enzymes, ion channels and other proteins by Ca(2+). Among the enzymes to be stimulated by the calmodulin-Ca(2+) complex are a number of protein kinases and phosphatases. The chain is Calmodulin from Karlodinium veneficum (Dinoflagellate).